The sequence spans 319 residues: Urease accessory protein UreD (319 aa).

The tract at residues 298–319 (QEQPLPPSSFKTNTAVPAVRTH) is disordered.

Belongs to the UreD family. In terms of assembly, ureD, UreF and UreG form a complex that acts as a GTP-hydrolysis-dependent molecular chaperone, activating the urease apoprotein by helping to assemble the nickel containing metallocenter of UreC. The UreE protein probably delivers the nickel.

Its subcellular location is the cytoplasm. Functionally, required for maturation of urease via the functional incorporation of the urease nickel metallocenter. The protein is Urease accessory protein UreD of Synechococcus sp. (strain WH7805).